Here is a 277-residue protein sequence, read N- to C-terminus: MRFGIVARRDREEALKLAYRVYDYLKVRGYDAIVDSETYEHFPHFKEEDIAKLEEFDVDFIIAIGGDGTILRIEHKTKKDIPILSINMGTLGFLTEVEPSETFFAINRLLRGEYYIDERIKLRTYINGEARIPDALNEVAILTGIPGKVIHLRYYVDGGLADEVRADGLVVATPTGSTGYAMSAGGPFVDPRLDTIIIAPLLPLPRTSVPMVVPGYSKIEIEFVTKREVILAVDGQYYEHLSPDIKIRIEKSPRKTKFVRFTREIYPKYTMRIKERH.

The Proton acceptor role is filled by Asp-67. NAD(+)-binding positions include 67 to 68, Arg-72, 137 to 138, Lys-148, Arg-165, Asp-167, 178 to 183, Leu-202, and Gln-236; these read DG, NE, and TGYAMS.

The protein belongs to the NAD kinase family. A divalent metal cation serves as cofactor.

The protein localises to the cytoplasm. It catalyses the reaction NAD(+) + ATP = ADP + NADP(+) + H(+). In terms of biological role, involved in the regulation of the intracellular balance of NAD and NADP, and is a key enzyme in the biosynthesis of NADP. Catalyzes specifically the phosphorylation on 2'-hydroxyl of the adenosine moiety of NAD to yield NADP. The chain is NAD kinase from Pyrococcus abyssi (strain GE5 / Orsay).